Reading from the N-terminus, the 151-residue chain is Acidic phospholipase A2 3 (151 aa).

Residues 1 to 27 form the signal peptide; the sequence is MYPAHLLVLLAVCVSLLGAASIPARPL. Cystine bridges form between Cys-38–Cys-104, Cys-54–Cys-151, Cys-56–Cys-72, Cys-71–Cys-132, Cys-78–Cys-125, Cys-88–Cys-118, and Cys-111–Cys-123. Residues Tyr-55, Gly-57, and Gly-59 each contribute to the Ca(2+) site. His-75 is an active-site residue. Asp-76 lines the Ca(2+) pocket. The active site involves Asp-126.

This sequence belongs to the phospholipase A2 family. Group I subfamily. D49 sub-subfamily. Ca(2+) is required as a cofactor. In terms of tissue distribution, expressed by the venom gland.

Its subcellular location is the secreted. It carries out the reaction a 1,2-diacyl-sn-glycero-3-phosphocholine + H2O = a 1-acyl-sn-glycero-3-phosphocholine + a fatty acid + H(+). Its function is as follows. PLA2 catalyzes the calcium-dependent hydrolysis of the 2-acyl groups in 3-sn-phosphoglycerides. This chain is Acidic phospholipase A2 3, found in Tropidechis carinatus (Australian rough-scaled snake).